Consider the following 227-residue polypeptide: Cytochrome c oxidase subunit 2 (227 aa).

Topologically, residues 1 to 14 (MAYPFELGFQDATS) are mitochondrial intermembrane. A helical membrane pass occupies residues 15 to 45 (PIMEELLHFHDHTLMIVFLISSLVLYIISLM). The Mitochondrial matrix portion of the chain corresponds to 46–59 (LTTKLTHTSTMDAQ). The chain crosses the membrane as a helical span at residues 60–87 (EVETIWTILPAIILILIALPSLRVLYMM). Topologically, residues 88–227 (DEINDPSLTV…HFENWSSSML (140 aa)) are mitochondrial intermembrane. Residues histidine 161, cysteine 196, glutamate 198, cysteine 200, histidine 204, and methionine 207 each contribute to the Cu cation site. A Mg(2+)-binding site is contributed by glutamate 198.

This sequence belongs to the cytochrome c oxidase subunit 2 family. In terms of assembly, component of the cytochrome c oxidase (complex IV, CIV), a multisubunit enzyme composed of 14 subunits. The complex is composed of a catalytic core of 3 subunits MT-CO1, MT-CO2 and MT-CO3, encoded in the mitochondrial DNA, and 11 supernumerary subunits COX4I, COX5A, COX5B, COX6A, COX6B, COX6C, COX7A, COX7B, COX7C, COX8 and NDUFA4, which are encoded in the nuclear genome. The complex exists as a monomer or a dimer and forms supercomplexes (SCs) in the inner mitochondrial membrane with NADH-ubiquinone oxidoreductase (complex I, CI) and ubiquinol-cytochrome c oxidoreductase (cytochrome b-c1 complex, complex III, CIII), resulting in different assemblies (supercomplex SCI(1)III(2)IV(1) and megacomplex MCI(2)III(2)IV(2)). Found in a complex with TMEM177, COA6, COX18, COX20, SCO1 and SCO2. Interacts with TMEM177 in a COX20-dependent manner. Interacts with COX20. Interacts with COX16. Requires Cu cation as cofactor.

Its subcellular location is the mitochondrion inner membrane. It carries out the reaction 4 Fe(II)-[cytochrome c] + O2 + 8 H(+)(in) = 4 Fe(III)-[cytochrome c] + 2 H2O + 4 H(+)(out). Functionally, component of the cytochrome c oxidase, the last enzyme in the mitochondrial electron transport chain which drives oxidative phosphorylation. The respiratory chain contains 3 multisubunit complexes succinate dehydrogenase (complex II, CII), ubiquinol-cytochrome c oxidoreductase (cytochrome b-c1 complex, complex III, CIII) and cytochrome c oxidase (complex IV, CIV), that cooperate to transfer electrons derived from NADH and succinate to molecular oxygen, creating an electrochemical gradient over the inner membrane that drives transmembrane transport and the ATP synthase. Cytochrome c oxidase is the component of the respiratory chain that catalyzes the reduction of oxygen to water. Electrons originating from reduced cytochrome c in the intermembrane space (IMS) are transferred via the dinuclear copper A center (CU(A)) of subunit 2 and heme A of subunit 1 to the active site in subunit 1, a binuclear center (BNC) formed by heme A3 and copper B (CU(B)). The BNC reduces molecular oxygen to 2 water molecules using 4 electrons from cytochrome c in the IMS and 4 protons from the mitochondrial matrix. This is Cytochrome c oxidase subunit 2 (MT-CO2) from Sciurus carolinensis (Eastern gray squirrel).